Consider the following 359-residue polypeptide: 3-dehydroquinate synthase (359 aa).

NAD(+) contacts are provided by residues 72-77 (EGEIHK), 106-110 (GVIGD), 130-131 (TS), K143, K152, and 170-173 (CLKT). Residues E185, H248, and H264 each coordinate Zn(2+).

It belongs to the sugar phosphate cyclases superfamily. Dehydroquinate synthase family. Co(2+) serves as cofactor. Zn(2+) is required as a cofactor. It depends on NAD(+) as a cofactor.

The protein localises to the cytoplasm. It carries out the reaction 7-phospho-2-dehydro-3-deoxy-D-arabino-heptonate = 3-dehydroquinate + phosphate. Its pathway is metabolic intermediate biosynthesis; chorismate biosynthesis; chorismate from D-erythrose 4-phosphate and phosphoenolpyruvate: step 2/7. Its function is as follows. Catalyzes the conversion of 3-deoxy-D-arabino-heptulosonate 7-phosphate (DAHP) to dehydroquinate (DHQ). This chain is 3-dehydroquinate synthase, found in Dehalococcoides mccartyi (strain CBDB1).